The chain runs to 235 residues: Urease accessory protein UreF (235 aa).

The protein belongs to the UreF family. UreD, UreF and UreG form a complex that acts as a GTP-hydrolysis-dependent molecular chaperone, activating the urease apoprotein by helping to assemble the nickel containing metallocenter of UreC. The UreE protein probably delivers the nickel.

The protein resides in the cytoplasm. Functionally, required for maturation of urease via the functional incorporation of the urease nickel metallocenter. This is Urease accessory protein UreF from Psychrobacter cryohalolentis (strain ATCC BAA-1226 / DSM 17306 / VKM B-2378 / K5).